We begin with the raw amino-acid sequence, 162 residues long: Protein hcp1 (162 aa).

This sequence belongs to the hcp1 family. As to quaternary structure, hexamer. Three hcp1 monomers form two closely related hexameric rings with a 40 Angstrom internal diameter.

It localises to the secreted. Required for assembly of the protein secretion apparatus HSI-I. Actively secreted during chronic infection of cystic fibrosis patients. The chain is Protein hcp1 (hcp1) from Pseudomonas aeruginosa (strain ATCC 15692 / DSM 22644 / CIP 104116 / JCM 14847 / LMG 12228 / 1C / PRS 101 / PAO1).